We begin with the raw amino-acid sequence, 337 residues long: DNA-directed RNA polymerase subunit alpha (337 aa).

Residues 1-233 are alpha N-terminal domain (alpha-NTD); sequence MVREKVTVST…DLFIPFLHME (233 aa). Positions 265–337 are alpha C-terminal domain (alpha-CTD); the sequence is KKIALKSIFI…FVIDLAKNKF (73 aa).

This sequence belongs to the RNA polymerase alpha chain family. In plastids the minimal PEP RNA polymerase catalytic core is composed of four subunits: alpha, beta, beta', and beta''. When a (nuclear-encoded) sigma factor is associated with the core the holoenzyme is formed, which can initiate transcription.

It is found in the plastid. It localises to the chloroplast. It carries out the reaction RNA(n) + a ribonucleoside 5'-triphosphate = RNA(n+1) + diphosphate. In terms of biological role, DNA-dependent RNA polymerase catalyzes the transcription of DNA into RNA using the four ribonucleoside triphosphates as substrates. The sequence is that of DNA-directed RNA polymerase subunit alpha from Solanum lycopersicum (Tomato).